Reading from the N-terminus, the 238-residue chain is MAGHSKWANTKHRKERADHKKGKIFSRTIKELISAVKMGGPDPKSNARLRMIIQKAKDQNIPNENIERNLKKASSADQKNYEEVTYELYGFGGVGIIVEAMTDNKNRTASDMRVAVNKRGGALVEPGSVLYNFSRKGACYVPKHSIDEASLLTHMIDCGGEDLDSDDEEFFLVLCEPTDLASVKEALLAKGVTCSEERLIYVPLRLVDCDEETGKSNLALIEWLENINDVDDVYHNMA.

Residues 1–21 (MAGHSKWANTKHRKERADHKK) form a disordered region. Positions 9 to 21 (NTKHRKERADHKK) are enriched in basic residues.

The protein belongs to the TACO1 family.

It localises to the cytoplasm. The protein is Probable transcriptional regulatory protein CT_457 of Chlamydia trachomatis serovar D (strain ATCC VR-885 / DSM 19411 / UW-3/Cx).